We begin with the raw amino-acid sequence, 278 residues long: ADP-dependent (S)-NAD(P)H-hydrate dehydratase (278 aa).

The region spanning Asp4–Leu276 is the YjeF C-terminal domain. Residues Ala39, Gly102, and His152 each coordinate (6S)-NADPHX. AMP is bound at residue Gly216. Position 217 (Asp217) interacts with (6S)-NADPHX.

It belongs to the NnrD/CARKD family. Homotetramer. Requires Mg(2+) as cofactor.

It carries out the reaction (6S)-NADHX + ADP = AMP + phosphate + NADH + H(+). The catalysed reaction is (6S)-NADPHX + ADP = AMP + phosphate + NADPH + H(+). In terms of biological role, catalyzes the dehydration of the S-form of NAD(P)HX at the expense of ADP, which is converted to AMP. Together with NAD(P)HX epimerase, which catalyzes the epimerization of the S- and R-forms, the enzyme allows the repair of both epimers of NAD(P)HX, a damaged form of NAD(P)H that is a result of enzymatic or heat-dependent hydration. This chain is ADP-dependent (S)-NAD(P)H-hydrate dehydratase, found in Streptococcus thermophilus.